A 91-amino-acid chain; its full sequence is uncharacterized protein (91 aa).

The 91-residue stretch at 1–91 (MLTFWHWKWL…YQNILRENGI (91 aa)) folds into the Integrase catalytic domain.

This is an uncharacterized protein from Haemophilus influenzae (strain ATCC 51907 / DSM 11121 / KW20 / Rd).